A 261-amino-acid polypeptide reads, in one-letter code: Mediator of RNA polymerase II transcription subunit 7 (261 aa).

2 disordered regions span residues 1–55 (MAEA…TPAE) and 224–250 (DSAS…ANSS). Composition is skewed to basic and acidic residues over residues 23-45 (FTPD…EDGK) and 230-240 (GENDTAKRTTG). Residues 241–250 (DQDANNANSS) are compositionally biased toward polar residues.

The protein belongs to the Mediator complex subunit 7 family. In terms of assembly, component of the Mediator complex.

Its subcellular location is the nucleus. Functionally, component of the Mediator complex, a coactivator involved in the regulated transcription of nearly all RNA polymerase II-dependent genes. Mediator functions as a bridge to convey information from gene-specific regulatory proteins to the basal RNA polymerase II transcription machinery. Mediator is recruited to promoters by direct interactions with regulatory proteins and serves as a scaffold for the assembly of a functional preinitiation complex with RNA polymerase II and the general transcription factors. The sequence is that of Mediator of RNA polymerase II transcription subunit 7 (med7) from Neosartorya fischeri (strain ATCC 1020 / DSM 3700 / CBS 544.65 / FGSC A1164 / JCM 1740 / NRRL 181 / WB 181) (Aspergillus fischerianus).